Here is a 208-residue protein sequence, read N- to C-terminus: Large ribosomal subunit protein uL4 (208 aa).

The tract at residues 50 to 83 (VKTRAEVSGGGRKPWKQKGTGRARQGSIRAPQWK) is disordered.

The protein belongs to the universal ribosomal protein uL4 family. As to quaternary structure, part of the 50S ribosomal subunit.

Its function is as follows. One of the primary rRNA binding proteins, this protein initially binds near the 5'-end of the 23S rRNA. It is important during the early stages of 50S assembly. It makes multiple contacts with different domains of the 23S rRNA in the assembled 50S subunit and ribosome. Forms part of the polypeptide exit tunnel. The sequence is that of Large ribosomal subunit protein uL4 from Mycoplasma capricolum subsp. capricolum (strain California kid / ATCC 27343 / NCTC 10154).